A 564-amino-acid chain; its full sequence is Dihydroxy-acid dehydratase (564 aa).

A [2Fe-2S] cluster-binding site is contributed by C55. D87 provides a ligand contact to Mg(2+). Position 128 (C128) interacts with [2Fe-2S] cluster. 2 residues coordinate Mg(2+): D129 and K130. K130 carries the post-translational modification N6-carboxylysine. C200 provides a ligand contact to [2Fe-2S] cluster. Residue E452 participates in Mg(2+) binding. S478 serves as the catalytic Proton acceptor.

It belongs to the IlvD/Edd family. As to quaternary structure, homodimer. It depends on [2Fe-2S] cluster as a cofactor. Requires Mg(2+) as cofactor.

It carries out the reaction (2R)-2,3-dihydroxy-3-methylbutanoate = 3-methyl-2-oxobutanoate + H2O. It catalyses the reaction (2R,3R)-2,3-dihydroxy-3-methylpentanoate = (S)-3-methyl-2-oxopentanoate + H2O. Its pathway is amino-acid biosynthesis; L-isoleucine biosynthesis; L-isoleucine from 2-oxobutanoate: step 3/4. The protein operates within amino-acid biosynthesis; L-valine biosynthesis; L-valine from pyruvate: step 3/4. In terms of biological role, functions in the biosynthesis of branched-chain amino acids. Catalyzes the dehydration of (2R,3R)-2,3-dihydroxy-3-methylpentanoate (2,3-dihydroxy-3-methylvalerate) into 2-oxo-3-methylpentanoate (2-oxo-3-methylvalerate) and of (2R)-2,3-dihydroxy-3-methylbutanoate (2,3-dihydroxyisovalerate) into 2-oxo-3-methylbutanoate (2-oxoisovalerate), the penultimate precursor to L-isoleucine and L-valine, respectively. The sequence is that of Dihydroxy-acid dehydratase from Polaromonas naphthalenivorans (strain CJ2).